The chain runs to 388 residues: Transcription factor TB1 (388 aa).

The TCP domain occupies 115-173 (RKDRHSKISTAGGMRDRRMRLSLDVARKFFALQDMLGFDKASKTVQWLLNMSKAAIREI). Disordered regions lie at residues 180–269 (SVCE…EKNR) and 289–331 (AAGE…VGVS). The segment covering 187 to 201 (SSSLSVDGKQQQHSN) has biased composition (polar residues). Basic and acidic residues-rich tracts occupy residues 210 to 224 (GDHKGAAHGHSDGKK) and 247 to 269 (VPDKESRAKARERARERTKEKNR). In terms of domain architecture, R spans 250–267 (KESRAKARERARERTKEK). The segment covering 289 to 314 (AAGEDKSPTSPSNNLNHSSSTNLVST) has biased composition (low complexity).

As to quaternary structure, interacts with MADS57. Expressed in the axillary bud of the first formed leaf node. Expressed in axillary buds, shoot apical meristem, young leaves, vascular tissues and the tips of crown roots.

The protein localises to the nucleus. Probable transcription factor that functions as a negative regulator of lateral branching, presumably through its expression in axillary buds. Involved in the fine tuning of shoot branching. May function as an integrator of multiple signaling pathways to regulate the development of axillary buds. Works partially downstream of strigolactones to inhibit bud outgrowth. Binds to MADS57 to suppress the negative regulation of D14 by MADS57 and balance the expression of D14 for tillering. The sequence is that of Transcription factor TB1 from Oryza sativa subsp. japonica (Rice).